The primary structure comprises 502 residues: Glycerol kinase (502 aa).

Residue Thr13 participates in ADP binding. Positions 13, 14, and 15 each coordinate ATP. Position 13 (Thr13) interacts with sn-glycerol 3-phosphate. Arg17 contributes to the ADP binding site. Positions 83, 84, 135, and 245 each coordinate sn-glycerol 3-phosphate. Residues Arg83, Glu84, Tyr135, Asp245, and Gln246 each coordinate glycerol. Residues Thr267 and Gly310 each contribute to the ADP site. ATP is bound by residues Thr267, Gly310, Gln314, and Gly411. ADP contacts are provided by Gly411 and Asn415.

The protein belongs to the FGGY kinase family. As to quaternary structure, homotetramer and homodimer (in equilibrium).

It catalyses the reaction glycerol + ATP = sn-glycerol 3-phosphate + ADP + H(+). It participates in polyol metabolism; glycerol degradation via glycerol kinase pathway; sn-glycerol 3-phosphate from glycerol: step 1/1. Activated by phosphorylation and inhibited by fructose 1,6-bisphosphate (FBP). Key enzyme in the regulation of glycerol uptake and metabolism. Catalyzes the phosphorylation of glycerol to yield sn-glycerol 3-phosphate. The sequence is that of Glycerol kinase from Lactobacillus delbrueckii subsp. bulgaricus (strain ATCC BAA-365 / Lb-18).